A 248-amino-acid polypeptide reads, in one-letter code: Biosynthetic peptidoglycan transglycosylase (248 aa).

A helical membrane pass occupies residues tryptophan 20–leucine 42.

The protein belongs to the glycosyltransferase 51 family.

It localises to the cell inner membrane. It carries out the reaction [GlcNAc-(1-&gt;4)-Mur2Ac(oyl-L-Ala-gamma-D-Glu-L-Lys-D-Ala-D-Ala)](n)-di-trans,octa-cis-undecaprenyl diphosphate + beta-D-GlcNAc-(1-&gt;4)-Mur2Ac(oyl-L-Ala-gamma-D-Glu-L-Lys-D-Ala-D-Ala)-di-trans,octa-cis-undecaprenyl diphosphate = [GlcNAc-(1-&gt;4)-Mur2Ac(oyl-L-Ala-gamma-D-Glu-L-Lys-D-Ala-D-Ala)](n+1)-di-trans,octa-cis-undecaprenyl diphosphate + di-trans,octa-cis-undecaprenyl diphosphate + H(+). It participates in cell wall biogenesis; peptidoglycan biosynthesis. In terms of biological role, peptidoglycan polymerase that catalyzes glycan chain elongation from lipid-linked precursors. This chain is Biosynthetic peptidoglycan transglycosylase, found in Xanthomonas euvesicatoria pv. vesicatoria (strain 85-10) (Xanthomonas campestris pv. vesicatoria).